We begin with the raw amino-acid sequence, 177 residues long: CDP-archaeol synthase (177 aa).

5 helical membrane passes run 6-26 (LFAS…ACIF), 54-74 (CIFG…LVDF), 90-110 (VILA…GSFI), 124-144 (LLDQ…VAPI), and 148-168 (MIII…IIAY).

The protein belongs to the CDP-archaeol synthase family. Requires Mg(2+) as cofactor.

It localises to the cell membrane. It catalyses the reaction 2,3-bis-O-(geranylgeranyl)-sn-glycerol 1-phosphate + CTP + H(+) = CDP-2,3-bis-O-(geranylgeranyl)-sn-glycerol + diphosphate. It functions in the pathway membrane lipid metabolism; glycerophospholipid metabolism. Its function is as follows. Catalyzes the formation of CDP-2,3-bis-(O-geranylgeranyl)-sn-glycerol (CDP-archaeol) from 2,3-bis-(O-geranylgeranyl)-sn-glycerol 1-phosphate (DGGGP) and CTP. This reaction is the third ether-bond-formation step in the biosynthesis of archaeal membrane lipids. This Methanocaldococcus jannaschii (strain ATCC 43067 / DSM 2661 / JAL-1 / JCM 10045 / NBRC 100440) (Methanococcus jannaschii) protein is CDP-archaeol synthase.